The chain runs to 298 residues: Acetyl-coenzyme A carboxylase carboxyl transferase subunit beta (298 aa).

Residues 41–298 (PTIECPECHA…RIVSKLMNLP (258 aa)) enclose the CoA carboxyltransferase N-terminal domain. The Zn(2+) site is built by Cys45, Cys48, Cys64, and Cys67. A C4-type zinc finger spans residues 45–67 (CPECHALVTRTAIAFNAYVCPSC).

Belongs to the AccD/PCCB family. In terms of assembly, acetyl-CoA carboxylase is a heterohexamer composed of biotin carboxyl carrier protein (AccB), biotin carboxylase (AccC) and two subunits each of ACCase subunit alpha (AccA) and ACCase subunit beta (AccD). Zn(2+) serves as cofactor.

The protein localises to the cytoplasm. It carries out the reaction N(6)-carboxybiotinyl-L-lysyl-[protein] + acetyl-CoA = N(6)-biotinyl-L-lysyl-[protein] + malonyl-CoA. The protein operates within lipid metabolism; malonyl-CoA biosynthesis; malonyl-CoA from acetyl-CoA: step 1/1. In terms of biological role, component of the acetyl coenzyme A carboxylase (ACC) complex. Biotin carboxylase (BC) catalyzes the carboxylation of biotin on its carrier protein (BCCP) and then the CO(2) group is transferred by the transcarboxylase to acetyl-CoA to form malonyl-CoA. The chain is Acetyl-coenzyme A carboxylase carboxyl transferase subunit beta from Acinetobacter baylyi (strain ATCC 33305 / BD413 / ADP1).